Consider the following 158-residue polypeptide: Endoribonuclease YbeY (158 aa).

His-122, His-126, and His-132 together coordinate Zn(2+).

This sequence belongs to the endoribonuclease YbeY family. Requires Zn(2+) as cofactor.

It is found in the cytoplasm. Single strand-specific metallo-endoribonuclease involved in late-stage 70S ribosome quality control and in maturation of the 3' terminus of the 16S rRNA. This is Endoribonuclease YbeY from Bacillus licheniformis (strain ATCC 14580 / DSM 13 / JCM 2505 / CCUG 7422 / NBRC 12200 / NCIMB 9375 / NCTC 10341 / NRRL NRS-1264 / Gibson 46).